A 489-amino-acid polypeptide reads, in one-letter code: Glutamyl-tRNA(Gln) amidotransferase subunit A (489 aa).

Residues Lys-78 and Ser-153 each act as charge relay system in the active site. Residue Ser-177 is the Acyl-ester intermediate of the active site.

It belongs to the amidase family. GatA subfamily. In terms of assembly, heterotrimer of A, B and C subunits.

It carries out the reaction L-glutamyl-tRNA(Gln) + L-glutamine + ATP + H2O = L-glutaminyl-tRNA(Gln) + L-glutamate + ADP + phosphate + H(+). Functionally, allows the formation of correctly charged Gln-tRNA(Gln) through the transamidation of misacylated Glu-tRNA(Gln) in organisms which lack glutaminyl-tRNA synthetase. The reaction takes place in the presence of glutamine and ATP through an activated gamma-phospho-Glu-tRNA(Gln). This chain is Glutamyl-tRNA(Gln) amidotransferase subunit A, found in Enterococcus faecalis (strain ATCC 700802 / V583).